The chain runs to 234 residues: Leucyl/phenylalanyl-tRNA--protein transferase (234 aa).

The protein belongs to the L/F-transferase family.

The protein resides in the cytoplasm. It carries out the reaction N-terminal L-lysyl-[protein] + L-leucyl-tRNA(Leu) = N-terminal L-leucyl-L-lysyl-[protein] + tRNA(Leu) + H(+). The enzyme catalyses N-terminal L-arginyl-[protein] + L-leucyl-tRNA(Leu) = N-terminal L-leucyl-L-arginyl-[protein] + tRNA(Leu) + H(+). It catalyses the reaction L-phenylalanyl-tRNA(Phe) + an N-terminal L-alpha-aminoacyl-[protein] = an N-terminal L-phenylalanyl-L-alpha-aminoacyl-[protein] + tRNA(Phe). In terms of biological role, functions in the N-end rule pathway of protein degradation where it conjugates Leu, Phe and, less efficiently, Met from aminoacyl-tRNAs to the N-termini of proteins containing an N-terminal arginine or lysine. This is Leucyl/phenylalanyl-tRNA--protein transferase from Dechloromonas aromatica (strain RCB).